The sequence spans 370 residues: 3-dehydroquinate synthase (370 aa).

Residues 108 to 112 (GVVGD), 132 to 133 (TT), Lys145, and Lys154 each bind NAD(+). Positions 187, 250, and 268 each coordinate Zn(2+).

This sequence belongs to the sugar phosphate cyclases superfamily. Dehydroquinate synthase family. It depends on Co(2+) as a cofactor. The cofactor is Zn(2+). NAD(+) is required as a cofactor.

The protein localises to the cytoplasm. It carries out the reaction 7-phospho-2-dehydro-3-deoxy-D-arabino-heptonate = 3-dehydroquinate + phosphate. Its pathway is metabolic intermediate biosynthesis; chorismate biosynthesis; chorismate from D-erythrose 4-phosphate and phosphoenolpyruvate: step 2/7. Functionally, catalyzes the conversion of 3-deoxy-D-arabino-heptulosonate 7-phosphate (DAHP) to dehydroquinate (DHQ). The chain is 3-dehydroquinate synthase from Caulobacter vibrioides (strain NA1000 / CB15N) (Caulobacter crescentus).